The chain runs to 279 residues: Undecaprenyl-diphosphatase (279 aa).

7 helical membrane-spanning segments follow: residues 10-30 (FICFKSFFLGIIQGFTEFLPI), 48-68 (LGVSFSASIQLGSAVAIIYYF), 96-116 (LFIYIFVASIPILVFGLLIKL), 128-148 (GLFSIAITSIVMSLLLALSEI), 203-223 (SFLVGIPAVSISGLVELFSLF), 229-249 (IDIIPIIIGIISSFFSSIFAI), and 259-279 (NNTLVFVYYRLAFGIFILTTL).

This sequence belongs to the UppP family.

It localises to the cell inner membrane. It carries out the reaction di-trans,octa-cis-undecaprenyl diphosphate + H2O = di-trans,octa-cis-undecaprenyl phosphate + phosphate + H(+). Its function is as follows. Catalyzes the dephosphorylation of undecaprenyl diphosphate (UPP). Confers resistance to bacitracin. In Prochlorococcus marinus (strain NATL1A), this protein is Undecaprenyl-diphosphatase.